Here is a 271-residue protein sequence, read N- to C-terminus: Shikimate dehydrogenase (NADP(+)) (271 aa).

Shikimate-binding positions include Ser-14–Ser-16 and Thr-61. Lys-65 functions as the Proton acceptor in the catalytic mechanism. Residues Asn-86 and Asp-102 each coordinate shikimate. Residues Gly-126–Ala-130, Asn-149–Arg-154, and Met-213 contribute to the NADP(+) site. Position 215 (Tyr-215) interacts with shikimate. NADP(+) is bound at residue Gly-238.

This sequence belongs to the shikimate dehydrogenase family. As to quaternary structure, homodimer.

It catalyses the reaction shikimate + NADP(+) = 3-dehydroshikimate + NADPH + H(+). It participates in metabolic intermediate biosynthesis; chorismate biosynthesis; chorismate from D-erythrose 4-phosphate and phosphoenolpyruvate: step 4/7. In terms of biological role, involved in the biosynthesis of the chorismate, which leads to the biosynthesis of aromatic amino acids. Catalyzes the reversible NADPH linked reduction of 3-dehydroshikimate (DHSA) to yield shikimate (SA). In Histophilus somni (strain 2336) (Haemophilus somnus), this protein is Shikimate dehydrogenase (NADP(+)).